Here is a 250-residue protein sequence, read N- to C-terminus: Zinc finger protein lsy-27 (250 aa).

2 consecutive C2H2-type zinc fingers follow at residues 25 to 48 (FVCSSCSQNFQHSASLNRHRQLMH) and 52 to 75 (HTCMMCERALNQKETIREHMRNEH). The C2H2-type 3; degenerate zinc finger occupies 81 to 104 (FTCGCCNWTFASKRQLTEHTKCIQ). Disordered stretches follow at residues 126–177 (IQST…EAER) and 226–250 (QKVKAEGPAVESKMIPEKHVKQEIE). Residues 148–165 (SLSPSSSVSTSISSRDAS) show a composition bias toward low complexity. Basic and acidic residues predominate over residues 239-250 (MIPEKHVKQEIE).

In terms of biological role, involved in regulating left/right asymmetric differentiation of the gustatory ASE neurons. Plays a role in modulating expression of LIM/homeobox protein lim-6. The sequence is that of Zinc finger protein lsy-27 from Caenorhabditis elegans.